The following is a 616-amino-acid chain: UvrABC system protein C (616 aa).

The GIY-YIG domain maps to 12–97 (NDAGVYQYFD…IKQLKPKYNI (86 aa)). The UVR domain maps to 203 to 238 (TKLISKLNEKMLQYSNDFRFEEAMTLRDRIKTIEKS).

It belongs to the UvrC family. In terms of assembly, interacts with UvrB in an incision complex.

It is found in the cytoplasm. Its function is as follows. The UvrABC repair system catalyzes the recognition and processing of DNA lesions. UvrC both incises the 5' and 3' sides of the lesion. The N-terminal half is responsible for the 3' incision and the C-terminal half is responsible for the 5' incision. The sequence is that of UvrABC system protein C from Aliarcobacter butzleri (strain RM4018) (Arcobacter butzleri).